We begin with the raw amino-acid sequence, 691 residues long: Elongation factor G (691 aa).

Residues 8-282 (EKTRNIGIMA…AVVDYLPSPV (275 aa)) enclose the tr-type G domain. Residues 17-24 (AHIDAGKT), 81-85 (DTPGH), and 135-138 (NKMD) contribute to the GTP site.

This sequence belongs to the TRAFAC class translation factor GTPase superfamily. Classic translation factor GTPase family. EF-G/EF-2 subfamily.

Its subcellular location is the cytoplasm. In terms of biological role, catalyzes the GTP-dependent ribosomal translocation step during translation elongation. During this step, the ribosome changes from the pre-translocational (PRE) to the post-translocational (POST) state as the newly formed A-site-bound peptidyl-tRNA and P-site-bound deacylated tRNA move to the P and E sites, respectively. Catalyzes the coordinated movement of the two tRNA molecules, the mRNA and conformational changes in the ribosome. This chain is Elongation factor G, found in Caldicellulosiruptor saccharolyticus (strain ATCC 43494 / DSM 8903 / Tp8T 6331).